The sequence spans 182 residues: Large ribosomal subunit protein uL5 (182 aa).

The protein belongs to the universal ribosomal protein uL5 family. As to quaternary structure, part of the 50S ribosomal subunit; part of the 5S rRNA/L5/L18/L25 subcomplex. Contacts the 5S rRNA and the P site tRNA. Forms a bridge to the 30S subunit in the 70S ribosome.

Its function is as follows. This is one of the proteins that bind and probably mediate the attachment of the 5S RNA into the large ribosomal subunit, where it forms part of the central protuberance. In the 70S ribosome it contacts protein S13 of the 30S subunit (bridge B1b), connecting the 2 subunits; this bridge is implicated in subunit movement. Contacts the P site tRNA; the 5S rRNA and some of its associated proteins might help stabilize positioning of ribosome-bound tRNAs. In Borreliella afzelii (strain PKo) (Borrelia afzelii), this protein is Large ribosomal subunit protein uL5.